Here is a 263-residue protein sequence, read N- to C-terminus: Putative ankyrin repeat domain-containing protein 20A12 pseudogene (263 aa).

Coiled coils occupy residues 65 to 121 (KKDL…MLES) and 171 to 263 (NQVF…IQLH).

This Homo sapiens (Human) protein is Putative ankyrin repeat domain-containing protein 20A12 pseudogene.